A 506-amino-acid polypeptide reads, in one-letter code: Histidine ammonia-lyase (506 aa).

Positions Ala144–Gly146 form a cross-link, 5-imidazolinone (Ala-Gly). Ser145 carries the post-translational modification 2,3-didehydroalanine (Ser).

It belongs to the PAL/histidase family. In terms of processing, contains an active site 4-methylidene-imidazol-5-one (MIO), which is formed autocatalytically by cyclization and dehydration of residues Ala-Ser-Gly.

It is found in the cytoplasm. It carries out the reaction L-histidine = trans-urocanate + NH4(+). It participates in amino-acid degradation; L-histidine degradation into L-glutamate; N-formimidoyl-L-glutamate from L-histidine: step 1/3. The chain is Histidine ammonia-lyase from Legionella pneumophila (strain Lens).